Reading from the N-terminus, the 597-residue chain is MFASCHCVPRGRRTMKMIHFRSSSVKSLSQEMRCTIRLLDDSEISCHIQRETKGQFLIDHICNYYSLLEKDYFGIRYVDPEKQRHWLEPNKSIFKQMKTHPPYTMCFRVKFYPHEPLKIKEELTRYLLYLQIKRDIFHGRLLCSFSDAAYLGACIVQAELGDYDPDEHPENYISEFEIFPKQSQKLERKIVEIHKNELRGQSPPVAEFNLLLKAHTLETYGVDPHPCKDSTGTTTFLGFTAAGFVVFQGNKRIHLIKWPDVCKLKFEGKTFYVIGTQKEKKAMLAFHTSTPAACKHLWKCGVENQAFYKYAKSSQIKTVSSSKIFFKGSRFRYSGKVAKEVVEASSKIQREPPEVHRANITQSRSSHSLNKQLIINMEPLQPLLPSPSEQEEELPLGEGVPLPKEENISAPLISSSPVKAAREYEDPPSEEEDKIKEEPLTISELVYNPSASLLPTPVDDDEIDMLFDCPSRLELEREDTDSFEDLEADENAFLIAEEEELKEARRALSWSYDILTGHIRVNPLVKSFSRLLVVGLGLLLFVFPLLLLLLESGIDLSFLCEIRQTPEFEQFHYEYYCPLKEWVAGKVHLILYMLGCS.

The FERM domain occupies 32 to 312 (MRCTIRLLDD…ENQAFYKYAK (281 aa)). Positions 383 to 403 (LLPSPSEQEEELPLGEGVPLP) are disordered. Residues 531-551 (LLVVGLGLLLFVFPLLLLLLE) traverse the membrane as a helical segment.

Ovary-specific.

It localises to the membrane. Functionally, putative tumor suppressor gene that may be implicated in the origin and progression of lung cancer. The polypeptide is FERM domain-containing protein 3 (FRMD3) (Homo sapiens (Human)).